Reading from the N-terminus, the 926-residue chain is Alpha-aminoadipic semialdehyde synthase, mitochondrial (926 aa).

A mitochondrion-targeting transit peptide spans 1-27 (MLRAQRPRLARLRACLSRGLHHKPVMA). Residues 28–455 (LRREDVNAWE…DAVITSNGLL (428 aa)) are lysine-ketoglutarate reductase. 3 positions are modified to N6-acetyllysine: K48, K52, and K56. K93 is subject to N6-acetyllysine; alternate. K93 carries the post-translational modification N6-succinyllysine; alternate. An N6-acetyllysine modification is found at K128. N6-acetyllysine; alternate is present on K138. N6-succinyllysine; alternate is present on K138. At K274 the chain carries N6-succinyllysine. The residue at position 286 (K286) is an N6-acetyllysine; alternate. K286 bears the N6-succinyllysine; alternate mark. K333 bears the N6-succinyllysine mark. K458 is modified (N6-acetyllysine; alternate). K458 carries the N6-succinyllysine; alternate modification. Residues 477–926 (MSTKKKVLVL…VFNTQSTIKL (450 aa)) are saccharopine dehydrogenase. Residues S488, D512, and Q516 each coordinate NAD(+). K523 and K535 each carry N6-acetyllysine; alternate. K523 and K535 each carry N6-succinyllysine; alternate. The NAD(+) site is built by L554, A576, and S577. Residue 577–578 (SY) participates in L-saccharopine binding. Residue K584 is modified to N6-acetyllysine; alternate. Residue K584 is modified to N6-succinyllysine; alternate. Positions 603, 604, and 605 each coordinate NAD(+). Residue D604 participates in L-saccharopine binding. L-saccharopine is bound at residue R703. Residue K707 is modified to N6-acetyllysine. 724–726 (TLR) contacts L-saccharopine. An N6-succinyllysine modification is found at K732. K739 is subject to N6-acetyllysine. N6-acetyllysine; alternate is present on K761. K761 bears the N6-succinyllysine; alternate mark. N6-acetyllysine occurs at positions 778 and 780.

It in the N-terminal section; belongs to the AlaDH/PNT family. The protein in the C-terminal section; belongs to the saccharopine dehydrogenase family. In terms of assembly, homotetramer. As to expression, highly expressed in kidney and liver, very low expression is seen in heart, brain, spleen, lung, skeletal muscle and testis.

The protein localises to the mitochondrion. The catalysed reaction is L-saccharopine + NADP(+) + H2O = L-lysine + 2-oxoglutarate + NADPH + H(+). It catalyses the reaction L-saccharopine + NAD(+) + H2O = (S)-2-amino-6-oxohexanoate + L-glutamate + NADH + H(+). It functions in the pathway amino-acid degradation; L-lysine degradation via saccharopine pathway; glutaryl-CoA from L-lysine: step 1/6. The protein operates within amino-acid degradation; L-lysine degradation via saccharopine pathway; glutaryl-CoA from L-lysine: step 2/6. Its function is as follows. Bifunctional enzyme that catalyzes the first two steps in lysine degradation. The protein is Alpha-aminoadipic semialdehyde synthase, mitochondrial of Mus musculus (Mouse).